A 413-amino-acid chain; its full sequence is Gamma-glutamyl phosphate reductase (413 aa).

It belongs to the gamma-glutamyl phosphate reductase family.

The protein localises to the cytoplasm. It catalyses the reaction L-glutamate 5-semialdehyde + phosphate + NADP(+) = L-glutamyl 5-phosphate + NADPH + H(+). Its pathway is amino-acid biosynthesis; L-proline biosynthesis; L-glutamate 5-semialdehyde from L-glutamate: step 2/2. Its function is as follows. Catalyzes the NADPH-dependent reduction of L-glutamate 5-phosphate into L-glutamate 5-semialdehyde and phosphate. The product spontaneously undergoes cyclization to form 1-pyrroline-5-carboxylate. This is Gamma-glutamyl phosphate reductase from Rhodococcus jostii (strain RHA1).